The primary structure comprises 380 residues: Autophagy protein 5 (380 aa).

Residue K138 forms a Glycyl lysine isopeptide (Lys-Gly) (interchain with G-Cter in ATG12) linkage. A compositionally biased stretch (polar residues) spans 194–203 (TSSVEGQQGS). Disordered stretches follow at residues 194–215 (TSSVEGQQGSDEPESPGSGKPC) and 283–309 (RIPDDSETAPQAPDSAPNDDSDVTPRS).

This sequence belongs to the ATG5 family. As to quaternary structure, conjugated to ATG12. Conjugated to ATG12; which is essential for autophagy.

It localises to the cytoplasm. Functionally, required for autophagy. Conjugation to ATG12 is essential for plant nutrient recycling. The polypeptide is Autophagy protein 5 (ATG5) (Oryza sativa subsp. indica (Rice)).